The following is a 351-amino-acid chain: Glucose 1-dehydrogenase 1 (351 aa).

Cysteine 39 lines the Zn(2+) pocket. A substrate-binding site is contributed by threonine 41. The Zn(2+) site is built by histidine 64 and glutamate 65. Substrate-binding residues include glutamate 113 and glutamate 149. Glutamate 149 provides a ligand contact to Zn(2+). NADP(+) is bound by residues 182–185 (AGPI), 265–267 (LGI), and 292–294 (ATN). A substrate-binding site is contributed by asparagine 294.

This sequence belongs to the zinc-containing alcohol dehydrogenase family. Glucose 1-dehydrogenase subfamily. It depends on Zn(2+) as a cofactor.

It carries out the reaction D-glucose + NAD(+) = D-glucono-1,5-lactone + NADH + H(+). The enzyme catalyses D-glucose + NADP(+) = D-glucono-1,5-lactone + NADPH + H(+). Functionally, catalyzes the NAD(P)(+)-dependent oxidation of D-glucose to D-gluconate via gluconolactone. Can utilize both NAD(+) and NADP(+) as electron acceptor. Is involved in the degradation of glucose through a non-phosphorylative variant of the Entner-Doudoroff pathway. The sequence is that of Glucose 1-dehydrogenase 1 from Vulcanisaeta moutnovskia (strain 768-28).